We begin with the raw amino-acid sequence, 187 residues long: ATP synthase subunit b 2 (187 aa).

A helical transmembrane segment spans residues 39-61 (SQLVWLVLSFAALYLLMSRVALP).

The protein belongs to the ATPase B chain family. F-type ATPases have 2 components, F(1) - the catalytic core - and F(0) - the membrane proton channel. F(1) has five subunits: alpha(3), beta(3), gamma(1), delta(1), epsilon(1). F(0) has three main subunits: a(1), b(2) and c(10-14). The alpha and beta chains form an alternating ring which encloses part of the gamma chain. F(1) is attached to F(0) by a central stalk formed by the gamma and epsilon chains, while a peripheral stalk is formed by the delta and b chains.

Its subcellular location is the cell inner membrane. F(1)F(0) ATP synthase produces ATP from ADP in the presence of a proton or sodium gradient. F-type ATPases consist of two structural domains, F(1) containing the extramembraneous catalytic core and F(0) containing the membrane proton channel, linked together by a central stalk and a peripheral stalk. During catalysis, ATP synthesis in the catalytic domain of F(1) is coupled via a rotary mechanism of the central stalk subunits to proton translocation. In terms of biological role, component of the F(0) channel, it forms part of the peripheral stalk, linking F(1) to F(0). This is ATP synthase subunit b 2 from Parvibaculum lavamentivorans (strain DS-1 / DSM 13023 / NCIMB 13966).